The chain runs to 218 residues: Zinc finger BED domain-containing protein 2 (218 aa).

The span at Met-1–Gly-11 shows a compositional bias: acidic residues. Residues Met-1–Glu-24 form a disordered region. Residues Thr-52–Ser-113 form a BED-type zinc finger. Zn(2+)-binding residues include Cys-78, Cys-81, His-101, and His-106. The tract at residues Ser-104–Gly-137 is disordered. Positions Met-105–Gly-114 are enriched in basic and acidic residues.

In terms of tissue distribution, expressed in keratinocytes.

It is found in the nucleus. Functionally, transcriptional regulator which has intrinsic repressor activity and which competes with the transcriptional activator IRF1 for binding to the 5'-[CA]GAA[AC]C[CT]-3' consensus sequence in gene promoters. May thereby play a role in keratinocyte differentiation. This Homo sapiens (Human) protein is Zinc finger BED domain-containing protein 2 (ZBED2).